Reading from the N-terminus, the 644-residue chain is Chaperone protein HtpG (644 aa).

An a; substrate-binding region spans residues Met-1–Arg-352. Residues Glu-353–Arg-566 are b. Positions Leu-567–Leu-644 are c.

Belongs to the heat shock protein 90 family. As to quaternary structure, homodimer.

The protein localises to the cytoplasm. Molecular chaperone. Has ATPase activity. The polypeptide is Chaperone protein HtpG (Mycobacterium avium (strain 104)).